A 235-amino-acid chain; its full sequence is Ferric nitrobindin-like protein (235 aa).

Residues 1–59 (MSDLASEGSDPAERASEHSNGNAPADRPARRSGDQAVADAAERAKATGSRNIPVLPDLP) are disordered. The GXWXGXG motif lies at 85-91 (GVWRGEG).

The protein belongs to the nitrobindin family.

The sequence is that of Ferric nitrobindin-like protein from Nocardia farcinica (strain IFM 10152).